Consider the following 1236-residue polypeptide: ATP-dependent helicase/nuclease subunit A (1236 aa).

Residues 2 to 457 (AHWTIEQEEA…VDLNKNFRSH (456 aa)) form the UvrD-like helicase ATP-binding domain. 23-30 (AAAGSGKT) contacts ATP. The UvrD-like helicase C-terminal domain occupies 515–816 (NTAKRVEICI…RIMSIHKSKG (302 aa)).

Belongs to the helicase family. AddA subfamily. Heterodimer of AddA and AddB/RexB. The cofactor is Mg(2+).

It catalyses the reaction Couples ATP hydrolysis with the unwinding of duplex DNA by translocating in the 3'-5' direction.. It carries out the reaction ATP + H2O = ADP + phosphate + H(+). Its function is as follows. The heterodimer acts as both an ATP-dependent DNA helicase and an ATP-dependent, dual-direction single-stranded exonuclease. Recognizes the chi site generating a DNA molecule suitable for the initiation of homologous recombination. The AddA nuclease domain is required for chi fragment generation; this subunit has the helicase and 3' -&gt; 5' nuclease activities. This chain is ATP-dependent helicase/nuclease subunit A, found in Syntrophomonas wolfei subsp. wolfei (strain DSM 2245B / Goettingen).